Here is a 329-residue protein sequence, read N- to C-terminus: Ribosomal RNA small subunit methyltransferase H (329 aa).

S-adenosyl-L-methionine contacts are provided by residues 39–41, Asp-57, Phe-84, Asp-100, and Gln-107; that span reads GGY. A disordered region spans residues 285 to 305; the sequence is GPDKDELAQNPRSRSALLRVG.

It belongs to the methyltransferase superfamily. RsmH family.

The protein resides in the cytoplasm. It carries out the reaction cytidine(1402) in 16S rRNA + S-adenosyl-L-methionine = N(4)-methylcytidine(1402) in 16S rRNA + S-adenosyl-L-homocysteine + H(+). Its function is as follows. Specifically methylates the N4 position of cytidine in position 1402 (C1402) of 16S rRNA. This Ruegeria sp. (strain TM1040) (Silicibacter sp.) protein is Ribosomal RNA small subunit methyltransferase H.